A 588-amino-acid chain; its full sequence is WD repeat-containing protein DDB_G0349043 (588 aa).

The interval 1–32 (MPLDNKVQLNENGKEVNNNNNNDEDLKIQDNH) is disordered. The region spanning 40–72 (NRSELVRLLIQSLNSLGYDKSAEFLEKDSGISL) is the LisH domain. A CTLH domain is found at 73-129 (QSKEINQFSECVVSGDWNKVEELLPFLKLNEFDTNNVKFLVYSQKFLEYLENHKIKE). WD repeat units follow at residues 244 to 283 (KHRDEIWFITFSHDGQRLASSSKDNTIIIWDMSTIYLDQP), 294 to 333 (GHTKEVSHLSWSPNDKYLLSASNDSTVKLWNTNDGTLLKT), and 336 to 375 (KHSDAVTCCGWHPDNKRFVSGGNDKNIYLWSIENLDLTNS). The segment at 376–403 (NNNNNNHNNNNSNINGNSINGSNNNGNN) is disordered. WD repeat units lie at residues 413–452 (WACARVNDLSIHKDGKQLIIICQEKKLRIYDLENEKTPEV), 455–494 (METDAITSMELSNDCNFALVNTSNQEIHLWDLEKQIIVQK), 499–539 (KQGR…LLET), and 542–582 (RHSG…NSFI).

This chain is WD repeat-containing protein DDB_G0349043, found in Dictyostelium discoideum (Social amoeba).